We begin with the raw amino-acid sequence, 119 residues long: Inner membrane protein YijD (119 aa).

Topologically, residues methionine 1 to arginine 8 are cytoplasmic. The chain crosses the membrane as a helical span at residues glycine 9–leucine 28. The Periplasmic portion of the chain corresponds to phenylalanine 29–serine 31. A helical membrane pass occupies residues isoleucine 32–leucine 50. Residues histidine 51–valine 61 are Cytoplasmic-facing. Residues glycine 62–alanine 84 form a helical membrane-spanning segment. Residues glutamate 85–aspartate 88 are Periplasmic-facing. Residues isoleucine 89 to alanine 108 form a helical membrane-spanning segment. The Cytoplasmic segment spans residues lysine 109–glutamate 119.

The protein resides in the cell inner membrane. The sequence is that of Inner membrane protein YijD (yijD) from Escherichia coli O6:H1 (strain CFT073 / ATCC 700928 / UPEC).